The following is a 302-amino-acid chain: UDP-3-O-acyl-N-acetylglucosamine deacetylase (302 aa).

Zn(2+)-binding residues include His-78, His-237, and Asp-241. His-264 serves as the catalytic Proton donor.

Belongs to the LpxC family. The cofactor is Zn(2+).

It catalyses the reaction a UDP-3-O-[(3R)-3-hydroxyacyl]-N-acetyl-alpha-D-glucosamine + H2O = a UDP-3-O-[(3R)-3-hydroxyacyl]-alpha-D-glucosamine + acetate. Its pathway is glycolipid biosynthesis; lipid IV(A) biosynthesis; lipid IV(A) from (3R)-3-hydroxytetradecanoyl-[acyl-carrier-protein] and UDP-N-acetyl-alpha-D-glucosamine: step 2/6. Its function is as follows. Catalyzes the hydrolysis of UDP-3-O-myristoyl-N-acetylglucosamine to form UDP-3-O-myristoylglucosamine and acetate, the committed step in lipid A biosynthesis. The polypeptide is UDP-3-O-acyl-N-acetylglucosamine deacetylase (Hahella chejuensis (strain KCTC 2396)).